We begin with the raw amino-acid sequence, 74 residues long: Protein translocase subunit SecE (74 aa).

At 1–36 (MKTDFNQKIEQLKEFIEECRRVWLVLKKPTKDEYLA) the chain is on the cytoplasmic side. The helical transmembrane segment at 37–62 (VAKVTALGISLLGIIGYIIHVPATYI) threads the bilayer. Residues 63–74 (KGILKPPTTPRV) lie on the Extracellular side of the membrane.

It belongs to the SecE/SEC61-gamma family. In terms of assembly, component of the Sec protein translocase complex. Heterotrimer consisting of alpha (SecY), beta (SecG) and gamma (SecE) subunits. The heterotrimers can form oligomers, although 1 heterotrimer is thought to be able to translocate proteins. Interacts with the ribosome. May interact with SecDF, and other proteins may be involved.

The protein localises to the cell membrane. Its function is as follows. Essential subunit of the protein translocation channel SecYEG. Clamps together the 2 halves of SecY. May contact the channel plug during translocation. The polypeptide is Protein translocase subunit SecE (Methanocaldococcus jannaschii (strain ATCC 43067 / DSM 2661 / JAL-1 / JCM 10045 / NBRC 100440) (Methanococcus jannaschii)).